The primary structure comprises 324 residues: Aldo-keto reductase family 1 member A1 (324 aa).

Ser-3 bears the Phosphoserine mark. NADP(+)-binding positions include Gly-10–Gly-19, Thr-20, and Trp-21. At Ser-37 the chain carries Phosphoserine. Asp-44 contributes to the NADP(+) binding site. Catalysis depends on Tyr-49, which acts as the Proton donor. Lys-126 carries the N6-acetyllysine; alternate modification. The residue at position 126 (Lys-126) is an N6-succinyllysine; alternate. Lys-144 carries the post-translational modification N6-succinyllysine. Residues Ser-161, Asn-162, Ser-210, Leu-212, Ser-214, Ser-215, Lys-262, Ser-263, Ile-264, Thr-265, Arg-268, Gln-271, and Asn-272 each contribute to the NADP(+) site. A Phosphoserine modification is found at Ser-210.

This sequence belongs to the aldo/keto reductase family.

The protein localises to the cytoplasm. Its subcellular location is the cytosol. It localises to the apical cell membrane. The catalysed reaction is a primary alcohol + NADP(+) = an aldehyde + NADPH + H(+). The enzyme catalyses L-gulonate + NADP(+) = aldehydo-D-glucuronate + NADPH + H(+). It catalyses the reaction L-gulono-1,4-lactone + NADP(+) = D-glucurono-3,6-lactone + NADPH + H(+). It carries out the reaction allyl alcohol + NADP(+) = acrolein + NADPH + H(+). The catalysed reaction is glycerol + NADP(+) = D-glyceraldehyde + NADPH + H(+). The enzyme catalyses glycerol + NADP(+) = L-glyceraldehyde + NADPH + H(+). It catalyses the reaction hydroxyacetone + NADP(+) = methylglyoxal + NADPH + H(+). It carries out the reaction 3-deoxyfructose + NADP(+) = 3-deoxyglucosone + NADPH + H(+). The catalysed reaction is (R)-mevalonate + NADP(+) = (R)-mevaldate + NADPH + H(+). The enzyme catalyses S-nitroso-CoA + NADPH + H(+) = sulfinamide-CoA + NADP(+). It catalyses the reaction S-nitrosoglutathione + NADPH + H(+) = S-(hydroxysulfenamide)glutathione + NADP(+). In terms of biological role, catalyzes the NADPH-dependent reduction of a wide variety of carbonyl-containing compounds to their corresponding alcohols. Displays enzymatic activity towards endogenous metabolites such as aromatic and aliphatic aldehydes, ketones, monosaccharides and bile acids, with a preference for negatively charged substrates, such as glucuronate and succinic semialdehyde. Plays an important role by catalyzing the reduction of D-glucuronic acid and D-glucurono-gamma-lactone. Functions as a detoxifiying enzyme by reducing a range of toxic aldehydes. Reduces methylglyoxal and 3-deoxyglucosone, which are present at elevated levels under hyperglycemic conditions and are cytotoxic. Involved also in the detoxification of lipid-derived aldehydes like acrolein. Plays a role in the activation of procarcinogens, such as polycyclic aromatic hydrocarbon trans-dihydrodiols, and in the metabolism of various xenobiotics and drugs. Also acts as an inhibitor of protein S-nitrosylation by mediating degradation of S-nitroso-coenzyme A (S-nitroso-CoA), a cofactor required to S-nitrosylate proteins. S-nitroso-CoA reductase activity is involved in reprogramming intermediary metabolism in renal proximal tubules, notably by inhibiting protein S-nitrosylation of isoform 2 of PKM (PKM2). Also acts as a S-nitroso-glutathione reductase by catalyzing the NADPH-dependent reduction of S-nitrosoglutathione. Displays no reductase activity towards retinoids. The chain is Aldo-keto reductase family 1 member A1 (AKR1A1) from Cricetulus griseus (Chinese hamster).